Consider the following 213-residue polypeptide: Uracil phosphoribosyltransferase (213 aa).

5-phospho-alpha-D-ribose 1-diphosphate-binding positions include arginine 78, arginine 103, and aspartate 131–threonine 139. Uracil is bound by residues isoleucine 197 and glycine 202 to alanine 204. Residue aspartate 203 coordinates 5-phospho-alpha-D-ribose 1-diphosphate.

Belongs to the UPRTase family. Mg(2+) serves as cofactor.

The enzyme catalyses UMP + diphosphate = 5-phospho-alpha-D-ribose 1-diphosphate + uracil. It functions in the pathway pyrimidine metabolism; UMP biosynthesis via salvage pathway; UMP from uracil: step 1/1. Its activity is regulated as follows. Allosterically activated by GTP. Its function is as follows. Catalyzes the conversion of uracil and 5-phospho-alpha-D-ribose 1-diphosphate (PRPP) to UMP and diphosphate. The polypeptide is Uracil phosphoribosyltransferase (Bifidobacterium animalis subsp. lactis (strain AD011)).